Here is a 573-residue protein sequence, read N- to C-terminus: Dihydroxy-acid dehydratase (573 aa).

Cys-62 provides a ligand contact to [2Fe-2S] cluster. Position 94 (Asp-94) interacts with Mg(2+). Cys-135 provides a ligand contact to [2Fe-2S] cluster. Mg(2+) is bound by residues Asp-136 and Lys-137. Residue Lys-137 is modified to N6-carboxylysine. Cys-212 contacts [2Fe-2S] cluster. Glu-463 is a Mg(2+) binding site. Ser-489 functions as the Proton acceptor in the catalytic mechanism.

This sequence belongs to the IlvD/Edd family. Homodimer. [2Fe-2S] cluster serves as cofactor. It depends on Mg(2+) as a cofactor.

The catalysed reaction is (2R)-2,3-dihydroxy-3-methylbutanoate = 3-methyl-2-oxobutanoate + H2O. It catalyses the reaction (2R,3R)-2,3-dihydroxy-3-methylpentanoate = (S)-3-methyl-2-oxopentanoate + H2O. It functions in the pathway amino-acid biosynthesis; L-isoleucine biosynthesis; L-isoleucine from 2-oxobutanoate: step 3/4. It participates in amino-acid biosynthesis; L-valine biosynthesis; L-valine from pyruvate: step 3/4. In terms of biological role, functions in the biosynthesis of branched-chain amino acids. Catalyzes the dehydration of (2R,3R)-2,3-dihydroxy-3-methylpentanoate (2,3-dihydroxy-3-methylvalerate) into 2-oxo-3-methylpentanoate (2-oxo-3-methylvalerate) and of (2R)-2,3-dihydroxy-3-methylbutanoate (2,3-dihydroxyisovalerate) into 2-oxo-3-methylbutanoate (2-oxoisovalerate), the penultimate precursor to L-isoleucine and L-valine, respectively. This Renibacterium salmoninarum (strain ATCC 33209 / DSM 20767 / JCM 11484 / NBRC 15589 / NCIMB 2235) protein is Dihydroxy-acid dehydratase.